Reading from the N-terminus, the 916-residue chain is DNA gyrase subunit A (916 aa).

One can recognise a Topo IIA-type catalytic domain in the interval 42–544; that stretch reads LPDVRDGLKP…FGGDIADEDL (503 aa). Y130 acts as the O-(5'-phospho-DNA)-tyrosine intermediate in catalysis. The GyrA-box signature appears at 571–577; that stretch reads QRRGGRG. Residues 739–748 are compositionally biased toward acidic residues; it reads SDDLEDETAD. Disordered regions lie at residues 739–774 and 897–916; these read SDDLEDETADNENTLPSGKNGVRPSGRGSGGLRGMR and ESELSGASVISNVTEPEAEN.

The protein belongs to the type II topoisomerase GyrA/ParC subunit family. As to quaternary structure, heterotetramer, composed of two GyrA and two GyrB chains. In the heterotetramer, GyrA contains the active site tyrosine that forms a transient covalent intermediate with DNA, while GyrB binds cofactors and catalyzes ATP hydrolysis.

Its subcellular location is the cytoplasm. It carries out the reaction ATP-dependent breakage, passage and rejoining of double-stranded DNA.. Its function is as follows. A type II topoisomerase that negatively supercoils closed circular double-stranded (ds) DNA in an ATP-dependent manner to modulate DNA topology and maintain chromosomes in an underwound state. Negative supercoiling favors strand separation, and DNA replication, transcription, recombination and repair, all of which involve strand separation. Also able to catalyze the interconversion of other topological isomers of dsDNA rings, including catenanes and knotted rings. Type II topoisomerases break and join 2 DNA strands simultaneously in an ATP-dependent manner. The chain is DNA gyrase subunit A from Neisseria gonorrhoeae.